The chain runs to 356 residues: Guanine nucleotide-binding protein alpha-2 subunit (356 aa).

The N-myristoyl glycine moiety is linked to residue Gly-2. Cys-4 is lipidated: S-palmitoyl cysteine. The region spanning 32–356 is the G-alpha domain; that stretch reads RTVKLLLLGA…QSNLHKSGLY (325 aa). Residues 35 to 48 form a G1 motif region; the sequence is KLLLLGAGECGKST. GTP is bound by residues Glu-43, Gly-45, Lys-46, Ser-47, Thr-48, Asp-153, Leu-178, Thr-184, Gly-206, Asn-272, Lys-273, Asp-275, and Ala-328. Ser-47 contributes to the Mg(2+) binding site. Positions 176–184 are G2 motif; the sequence is DTLLLRTKT. Mg(2+) is bound at residue Thr-184. The tract at residues 199 to 208 is G3 motif; sequence FRVFDVGGQR. A G4 motif region spans residues 268 to 275; it reads ILFLNKKD. Positions 326-331 are G5 motif; that stretch reads TCATDT.

It belongs to the G-alpha family. G(q) subfamily. As to quaternary structure, g proteins are composed of 3 units; alpha, beta and gamma. The alpha chain contains the guanine nucleotide binding site. The cofactor is Mg(2+).

Functionally, guanine nucleotide-binding proteins (G proteins) are involved as modulators or transducers in various transmembrane signaling systems. Involved in behavioral responses to P.aeruginosa by controlling the expression of daf-7, a member of the TGF-beta family, in ASJ sensory neurons. The protein is Guanine nucleotide-binding protein alpha-2 subunit (gpa-2) of Caenorhabditis elegans.